The sequence spans 599 residues: PR domain zinc finger protein 5 (599 aa).

The 117-residue stretch at 8-124 folds into the SET domain; it reads DRFALKSSRV…TDTELLIGYL (117 aa). C2H2-type zinc fingers lie at residues 167–190, 199–221, 231–256, 264–286, 289–311, 317–339, 345–367, 373–395, 401–424, 430–452, 458–480, and 486–508; these read FACP…QSLH, FKCE…FEQH, FVCK…ENVH, LICS…RKIH, FDCQ…MITH, YNCE…KVIH, YQCK…KKTH, FQCD…LLIH, FKCH…QVVH, YRCE…KKTH, KVCP…IRSH, and YQCP…IRTH. The C2H2-type 13; degenerate zinc finger occupies 514-536; the sequence is YQCSECSKAFSQKRGLDEHKRTH. C2H2-type zinc fingers lie at residues 542–564 and 571–594; these read FQCD…KMTH and AECH…DNIH.

This sequence belongs to the class V-like SAM-binding methyltransferase superfamily. In terms of assembly, interacts with EHMT2/G9A, GFI1 and HDAC1.

It is found in the nucleus. In terms of biological role, sequence-specific DNA-binding transcription factor. Represses transcription at least in part by recruitment of the histone methyltransferase EHMT2/G9A and histone deacetylases such as HDAC1. Regulates hematopoiesis-associated protein-coding and microRNA (miRNA) genes. May regulate the expression of proteins involved in extracellular matrix development and maintenance, connective tissue components and molecules regulating cell migration and adhesion. May cause G2/M arrest and apoptosis in cancer cells. The sequence is that of PR domain zinc finger protein 5 (Prdm5) from Mus musculus (Mouse).